The following is a 166-amino-acid chain: FMN reductase (NADH) RutF (166 aa).

The protein belongs to the non-flavoprotein flavin reductase family. RutF subfamily.

The catalysed reaction is FMNH2 + NAD(+) = FMN + NADH + 2 H(+). In terms of biological role, catalyzes the reduction of FMN to FMNH2 which is used to reduce pyrimidine by RutA via the Rut pathway. The chain is FMN reductase (NADH) RutF from Cronobacter sakazakii (strain ATCC BAA-894) (Enterobacter sakazakii).